A 503-amino-acid polypeptide reads, in one-letter code: Annexin A11 (503 aa).

Pro residues-rich tracts occupy residues 1–17, 80–145, and 155–169; these read MSYP…PPAP, GYPP…PYPG, and SPVP…PSYP. Disordered stretches follow at residues 1 to 35 and 56 to 178; these read MSYP…MPPI and AANM…GTVT. Annexin repeat units follow at residues 198-269, 270-341, 353-425, and 429-500; these read FDPL…ALMK, TPIL…SLSQ, SLVQ…AVVK, and NTPA…KICG. N6-acetyllysine occurs at positions 246 and 253. Lys477 bears the N6-acetyllysine mark.

Belongs to the annexin family. Interacts with PDCD6 in a calcium-dependent manner. Interacts with KIF23 during cytokinesis. Interacts with S100A6.

The protein resides in the cytoplasm. It is found in the melanosome. The protein localises to the nucleus envelope. It localises to the nucleus. Its subcellular location is the nucleoplasm. The protein resides in the cytoskeleton. It is found in the spindle. Required for midbody formation and completion of the terminal phase of cytokinesis. Binds specifically to calcyclin in a calcium-dependent manner. This Oryctolagus cuniculus (Rabbit) protein is Annexin A11 (ANXA11).